The sequence spans 554 residues: Putative mediator of RNA polymerase II transcription subunit 29 (554 aa).

Disordered regions lie at residues 118 to 301 (DNKA…NTEA), 330 to 381 (QQQQ…PLPQ), 398 to 428 (LENQ…LQLQ), and 483 to 524 (NTNL…DDNT). Residues 122 to 210 (NTNNNNNNNN…NNSINNNSNN (89 aa)) show a composition bias toward low complexity. A coiled-coil region spans residues 167-194 (NNNNNNNYNNNNNNNNNNNNNNNNNNNN). The span at 211 to 225 (KVGSNDNPSTAPITE) shows a compositional bias: polar residues. Low complexity predominate over residues 226 to 264 (NNTENNAGNTNNTNNNNNNNNNNNNNNNNNNNNNNNNTN). A compositionally biased stretch (polar residues) spans 265-300 (QVAESSNISSNTTPPETTNIVNDPNSVSGGNLTNTE). 3 stretches are compositionally biased toward low complexity: residues 330-374 (QQQQ…QQPQ), 419-428 (QQQQEQLQLQ), and 483-517 (NTNL…PEIN). Positions 419 to 486 (QQQQEQLQLQ…SLENQINTNL (68 aa)) form a coiled coil.

The protein belongs to the Mediator complex subunit 29 family. In terms of assembly, component of the Mediator complex.

Its subcellular location is the nucleus. Component of the Mediator complex, a coactivator involved in the regulated transcription of nearly all RNA polymerase II-dependent genes. Mediator functions as a bridge to convey information from gene-specific regulatory proteins to the basal RNA polymerase II transcription machinery. Mediator is recruited to promoters by direct interactions with regulatory proteins and serves as a scaffold for the assembly of a functional preinitiation complex with RNA polymerase II and the general transcription factors. The polypeptide is Putative mediator of RNA polymerase II transcription subunit 29 (med29) (Dictyostelium discoideum (Social amoeba)).